A 454-amino-acid polypeptide reads, in one-letter code: Bifunctional protein GlmU (454 aa).

The segment at 1–228 (MTLPLHVVIL…PQDVEGANDP (228 aa)) is pyrophosphorylase. Residues 10-13 (LAAG), K24, Q76, 81-82 (GT), 103-105 (YGD), G138, E153, N168, and N226 each bind UDP-N-acetyl-alpha-D-glucosamine. D105 is a binding site for Mg(2+). A Mg(2+)-binding site is contributed by N226. The segment at 229–249 (WQLAQLERAWQLRAARALSLQ) is linker. The segment at 250-454 (GVRMADPARV…IEGWERPTKK (205 aa)) is N-acetyltransferase. R332 and K350 together coordinate UDP-N-acetyl-alpha-D-glucosamine. Catalysis depends on H362, which acts as the Proton acceptor. UDP-N-acetyl-alpha-D-glucosamine-binding residues include Y365 and N376. Acetyl-CoA-binding positions include A379, 385–386 (NY), S404, A422, and R439.

This sequence in the N-terminal section; belongs to the N-acetylglucosamine-1-phosphate uridyltransferase family. In the C-terminal section; belongs to the transferase hexapeptide repeat family. As to quaternary structure, homotrimer. The cofactor is Mg(2+).

Its subcellular location is the cytoplasm. It carries out the reaction alpha-D-glucosamine 1-phosphate + acetyl-CoA = N-acetyl-alpha-D-glucosamine 1-phosphate + CoA + H(+). It catalyses the reaction N-acetyl-alpha-D-glucosamine 1-phosphate + UTP + H(+) = UDP-N-acetyl-alpha-D-glucosamine + diphosphate. The protein operates within nucleotide-sugar biosynthesis; UDP-N-acetyl-alpha-D-glucosamine biosynthesis; N-acetyl-alpha-D-glucosamine 1-phosphate from alpha-D-glucosamine 6-phosphate (route II): step 2/2. It functions in the pathway nucleotide-sugar biosynthesis; UDP-N-acetyl-alpha-D-glucosamine biosynthesis; UDP-N-acetyl-alpha-D-glucosamine from N-acetyl-alpha-D-glucosamine 1-phosphate: step 1/1. Its pathway is bacterial outer membrane biogenesis; LPS lipid A biosynthesis. In terms of biological role, catalyzes the last two sequential reactions in the de novo biosynthetic pathway for UDP-N-acetylglucosamine (UDP-GlcNAc). The C-terminal domain catalyzes the transfer of acetyl group from acetyl coenzyme A to glucosamine-1-phosphate (GlcN-1-P) to produce N-acetylglucosamine-1-phosphate (GlcNAc-1-P), which is converted into UDP-GlcNAc by the transfer of uridine 5-monophosphate (from uridine 5-triphosphate), a reaction catalyzed by the N-terminal domain. In Xanthomonas oryzae pv. oryzae (strain MAFF 311018), this protein is Bifunctional protein GlmU.